A 215-amino-acid chain; its full sequence is Guanylate kinase (215 aa).

The Guanylate kinase-like domain maps to 9–187; that stretch reads GTLYIVSAPS…ALDELSCLVH (179 aa). 16–23 is an ATP binding site; it reads APSGAGKT.

This sequence belongs to the guanylate kinase family.

It is found in the cytoplasm. It carries out the reaction GMP + ATP = GDP + ADP. Its function is as follows. Essential for recycling GMP and indirectly, cGMP. The sequence is that of Guanylate kinase from Chromohalobacter salexigens (strain ATCC BAA-138 / DSM 3043 / CIP 106854 / NCIMB 13768 / 1H11).